A 1506-amino-acid chain; its full sequence is DDB1- and CUL4-associated factor 1 (1506 aa).

The protein kinase-like stretch occupies residues 141-499 (QPLRTYSTGL…STLEILNLED (359 aa)). A phosphoserine mark is found at Ser202 and Ser254. Residues 241 to 275 (RLDSSHKTSSRVNSATKPEEGGLKKNKSAKHGDRE) are disordered. The region spanning 561 to 592 (SYTHEQIVEMMEFLIEYGPAQLYWEPAEVFLK) is the Chromo domain. The residue at position 700 (Lys700) is an N6-acetyllysine. At Ser827 the chain carries Phosphoserine. One can recognise a LisH domain in the interval 845–877 (PEKELLLLIRNHLISKGLGETATVLTREADLPM). Thr887 carries the phosphothreonine modification. Phosphoserine occurs at positions 894 and 897. Disordered stretches follow at residues 916-946 (ATVG…GPSY) and 977-999 (KSDH…HLPS). Residues 924 to 943 (SAPPAHPPPRPPQGSLPLPG) are compositionally biased toward pro residues. Phosphoserine is present on residues Ser978 and Ser999. 5 WD repeats span residues 1090–1129 (EDES…EEAS), 1132–1173 (CHNS…DMKH), 1175–1212 (FTED…KLLT), 1214–1246 (FNPD…WDVR), and 1247–1289 (SAQA…LLHT). Positions 1090-1289 (EDESGFTCCA…DLRTFHLLHT (200 aa)) are WD repeat-like region. Short sequence motifs (DWD box) lie at residues 1241–1248 (VLWDVRSA) and 1277–1284 (EIWDLRTF). At Ser1327 the chain carries Phosphoserine. Residues 1392 to 1506 (RLAEDEDEEE…EDDIILSLNE (115 aa)) are disordered. Composition is skewed to acidic residues over residues 1395 to 1482 (EDED…EEVE) and 1489 to 1500 (DSSDNSDLEDDI). The interaction with NF2 stretch occupies residues 1417-1506 (DDDTDDLDEL…EDDIILSLNE (90 aa)).

This sequence belongs to the VPRBP/DCAF1 family. Component of the DCX (DDB1-CUL4-X-box) E3 ubiquitin-protein ligase complex, named CUL4A-RBX1-DDB1-DCAF1/VPRBP complex. Interacts with DDB1; the interaction is direct. Also forms a ternary complex with DDA1 and DDB1. Interacts with NF2 (via FERM domain). Component of the EDVP complex, a E3 ligase complex containing DYRK2, EDD/UBR5, DDB1 and DCAF1. Interacts with DYRK2; the interaction is direct. Interacts with RAG1; the interaction is direct. Interacts with LLGL1 and LLGL2. Interacts with histone H3. Interacts with ESR1 and LATS1; probably recruited by LATS1 to promote ESR1 ubiquitination and ubiquitin-mediated proteasomal degradation. Directly interacts with TET1, TET2 and TET3 (via C-terminus). Interacts with CEP78; promoting DCAF1 localization to centrosomes. As to expression, widely expressed. Expressed in oocytes and zygotes (at protein level).

It is found in the cytoplasm. The protein localises to the nucleus. It localises to the cytoskeleton. The protein resides in the microtubule organizing center. Its subcellular location is the centrosome. The catalysed reaction is L-seryl-[protein] + ATP = O-phospho-L-seryl-[protein] + ADP + H(+). The enzyme catalyses L-threonyl-[protein] + ATP = O-phospho-L-threonyl-[protein] + ADP + H(+). It functions in the pathway protein modification; protein ubiquitination. In terms of biological role, acts both as a substrate recognition component of E3 ubiquitin-protein ligase complexes and as an atypical serine/threonine-protein kinase, playing key roles in various processes such as cell cycle, telomerase regulation and histone modification. Probable substrate-specific adapter of a DCX (DDB1-CUL4-X-box) E3 ubiquitin-protein ligase complex, named CUL4A-RBX1-DDB1-DCAF1/VPRBP complex, which mediates ubiquitination and proteasome-dependent degradation of proteins such as NF2. Involved in the turnover of methylated proteins: recognizes and binds methylated proteins via its chromo domain, leading to ubiquitination of target proteins by the RBX1-DDB1-DCAF1/VPRBP complex. The CUL4A-RBX1-DDB1-DCAF1/VPRBP complex is also involved in B-cell development: DCAF1 is recruited by RAG1 to ubiquitinate proteins, leading to limit error-prone repair during V(D)J recombination. Also part of the EDVP complex, an E3 ligase complex that mediates ubiquitination of proteins such as TERT, leading to TERT degradation and telomerase inhibition. The EDVP complex also mediates ubiquitination and degradation of CCP110. Also acts as an atypical serine/threonine-protein kinase that specifically mediates phosphorylation of 'Thr-120' of histone H2A (H2AT120ph) in a nucleosomal context, thereby repressing transcription. H2AT120ph is present in the regulatory region of many tumor suppresor genes, down-regulates their transcription and is present at high level in a number of tumors. Involved in JNK-mediated apoptosis during cell competition process via its interaction with LLGL1 and LLGL2. By acting on TET dioxygenses, essential for oocyte maintenance at the primordial follicle stage, hence essential for female fertility. The chain is DDB1- and CUL4-associated factor 1 from Mus musculus (Mouse).